A 634-amino-acid chain; its full sequence is MVVMKLITMKIFSVLLLLCFFVTCSLSSEPRNPEVEALINIKNELHDPHGVFKNWDEFSVDPCSWTMISCSSDNLVIGLGAPSQSLSGTLSGSIGNLTNLRQVSLQNNNISGKIPPEICSLPKLQTLDLSNNRFSGEIPGSVNQLSNLQYLRLNNNSLSGPFPASLSQIPHLSFLDLSYNNLRGPVPKFPARTFNVAGNPLICKNSLPEICSGSISASPLSVSLRSSSGRRTNILAVALGVSLGFAVSVILSLGFIWYRKKQRRLTMLRISDKQEEGLLGLGNLRSFTFRELHVATDGFSSKSILGAGGFGNVYRGKFGDGTVVAVKRLKDVNGTSGNSQFRTELEMISLAVHRNLLRLIGYCASSSERLLVYPYMSNGSVASRLKAKPALDWNTRKKIAIGAARGLFYLHEQCDPKIIHRDVKAANILLDEYFEAVVGDFGLAKLLNHEDSHVTTAVRGTVGHIAPEYLSTGQSSEKTDVFGFGILLLELITGMRALEFGKSVSQKGAMLEWVRKLHKEMKVEELVDRELGTTYDRIEVGEMLQVALLCTQFLPAHRPKMSEVVQMLEGDGLAERWAASHDHSHFYHANMSYRTITSTDGNNQTKHLFGSSGFEDEDDNQALDSFAMELSGPR.

Positions 1-27 (MVVMKLITMKIFSVLLLLCFFVTCSLS) are cleaved as a signal peptide. Over 28–236 (SEPRNPEVEA…SSGRRTNILA (209 aa)) the chain is Extracellular. N-linked (GlcNAc...) asparagine glycans are attached at residues N96 and N109. LRR repeat units lie at residues 99 to 121 (NLRQVSLQNNNISGKIPPEICSL), 123 to 145 (KLQTLDLSNNRFSGEIPGSVNQL), 147 to 167 (NLQYLRLNNNSLSGPFPASLS), and 171 to 193 (HLSFLDLSYNNLRGPVPKFPART). N155 carries N-linked (GlcNAc...) asparagine glycosylation. The chain crosses the membrane as a helical span at residues 237-257 (VALGVSLGFAVSVILSLGFIW). The Cytoplasmic portion of the chain corresponds to 258–634 (YRKKQRRLTM…SFAMELSGPR (377 aa)). At T296 the chain carries Phosphothreonine. One can recognise a Protein kinase domain in the interval 299–554 (FSSKSILGAG…QVALLCTQFL (256 aa)). 305–313 (LGAGGFGNV) is an ATP binding site. Position 322 is a phosphothreonine (T322). K327 lines the ATP pocket. S380 and S383 each carry phosphoserine. Position 395 is a phosphothreonine (T395). D422 (proton acceptor) is an active-site residue. 3 positions are modified to phosphothreonine: T455, T456, and T461. Y469 carries the phosphotyrosine modification. S471 carries the phosphoserine modification. T472 carries the phosphothreonine modification. Residue S476 is modified to Phosphoserine. The residue at position 551 (T551) is a Phosphothreonine.

Belongs to the protein kinase superfamily. Ser/Thr protein kinase family.

It is found in the membrane. The enzyme catalyses L-seryl-[protein] + ATP = O-phospho-L-seryl-[protein] + ADP + H(+). It carries out the reaction L-threonyl-[protein] + ATP = O-phospho-L-threonyl-[protein] + ADP + H(+). The protein is Probable LRR receptor-like serine/threonine-protein kinase At2g23950 of Arabidopsis thaliana (Mouse-ear cress).